Reading from the N-terminus, the 429-residue chain is Ribosomal RNA small subunit methyltransferase B (429 aa).

Residues 254 to 260 (CAAPGGK), aspartate 277, aspartate 303, and aspartate 322 each bind S-adenosyl-L-methionine. Cysteine 375 serves as the catalytic Nucleophile.

This sequence belongs to the class I-like SAM-binding methyltransferase superfamily. RsmB/NOP family.

It is found in the cytoplasm. It catalyses the reaction cytidine(967) in 16S rRNA + S-adenosyl-L-methionine = 5-methylcytidine(967) in 16S rRNA + S-adenosyl-L-homocysteine + H(+). Functionally, specifically methylates the cytosine at position 967 (m5C967) of 16S rRNA. This Escherichia coli (strain SMS-3-5 / SECEC) protein is Ribosomal RNA small subunit methyltransferase B.